The sequence spans 542 residues: 2,3-bisphosphoglycerate-independent phosphoglycerate mutase (542 aa).

Residues Asp-13 and Ser-63 each contribute to the Mn(2+) site. The Phosphoserine intermediate role is filled by Ser-63. Residues His-124, 154–155 (RD), Arg-186, Arg-192, 263–266 (RADR), and Lys-357 contribute to the substrate site. Residues Asp-424, His-428, Asp-465, His-466, and His-484 each contribute to the Mn(2+) site.

It belongs to the BPG-independent phosphoglycerate mutase family. In terms of assembly, monomer. It depends on Mn(2+) as a cofactor.

The catalysed reaction is (2R)-2-phosphoglycerate = (2R)-3-phosphoglycerate. It participates in carbohydrate degradation; glycolysis; pyruvate from D-glyceraldehyde 3-phosphate: step 3/5. Catalyzes the interconversion of 2-phosphoglycerate and 3-phosphoglycerate. The sequence is that of 2,3-bisphosphoglycerate-independent phosphoglycerate mutase from Herpetosiphon aurantiacus (strain ATCC 23779 / DSM 785 / 114-95).